The primary structure comprises 60 residues: Mastoparan-D (60 aa).

The first 27 residues, 1–27 (MKNTILILFTAFIALLGFFGMSAEALA), serve as a signal peptide directing secretion. 4 AXPX repeats span residues 27 to 30 (ADPI), 31 to 34 (ADPV), 35 to 38 (AGPN), and 41 to 44 (ADPE). A propeptide spanning residues 28–45 (DPIADPVAGPNPEADPEA) is cleaved from the precursor. Residue Leu59 is modified to Leucine amide.

The protein belongs to the MCD family. Mastoparan subfamily. Expressed by the venom gland.

The protein localises to the secreted. Its subcellular location is the target cell membrane. Functionally, antimicrobial and mast cell degranulating peptide. Has broad spectrum antibacterial activity against both Gram-positive and Gram-negative bacteria (S.aureus MIC=24-32 ug/ml, S.xylosus MIC=2 ug/ml, S.alactolyticus MIC=16 ug/ml, C.koseri MIC=4 ug/ml, E.coli MIC=8 ug/ml, K.pneumoniae MIC=32 ug/ml, P.aerugiosa MIC=128 ug/ml, S.choleraesuis MIC=16 ug/ml, S.typhimurium MIC=32 ug/ml, V.parahamelytics MIC=32 ug/ml). Affects membrane permeability of E.coli. Shows hemolytic activities on sheep, chicken and human erythrocytes. Its mast cell degranulation activity may be related to the activation of G-protein coupled receptors in mast cells as well as interaction with other proteins located in cell endosomal membranes in the mast cells. The protein is Mastoparan-D of Vespa ducalis (Black-tailed hornet).